The chain runs to 277 residues: Phosphoenolpyruvate synthase regulatory protein (277 aa).

157 to 164 (GVSRCGKT) contacts ADP.

The protein belongs to the pyruvate, phosphate/water dikinase regulatory protein family. PSRP subfamily.

It carries out the reaction [pyruvate, water dikinase] + ADP = [pyruvate, water dikinase]-phosphate + AMP + H(+). The enzyme catalyses [pyruvate, water dikinase]-phosphate + phosphate + H(+) = [pyruvate, water dikinase] + diphosphate. Bifunctional serine/threonine kinase and phosphorylase involved in the regulation of the phosphoenolpyruvate synthase (PEPS) by catalyzing its phosphorylation/dephosphorylation. This is Phosphoenolpyruvate synthase regulatory protein from Escherichia coli O17:K52:H18 (strain UMN026 / ExPEC).